Here is a 243-residue protein sequence, read N- to C-terminus: Methylthioribulose-1-phosphate dehydratase (243 aa).

Positions 1-22 are disordered; it reads MCPADQTVATNNNDHLVQSEDP. A compositionally biased stretch (polar residues) spans 7–16; the sequence is TVATNNNDHL. Cysteine 103 serves as a coordination point for substrate. 2 residues coordinate Zn(2+): histidine 120 and histidine 122. Glutamate 149 acts as the Proton donor/acceptor in catalysis. Residue histidine 205 participates in Zn(2+) binding.

It belongs to the aldolase class II family. MtnB subfamily. Requires Zn(2+) as cofactor.

The protein localises to the cytoplasm. It carries out the reaction 5-(methylsulfanyl)-D-ribulose 1-phosphate = 5-methylsulfanyl-2,3-dioxopentyl phosphate + H2O. It functions in the pathway amino-acid biosynthesis; L-methionine biosynthesis via salvage pathway; L-methionine from S-methyl-5-thio-alpha-D-ribose 1-phosphate: step 2/6. In terms of biological role, catalyzes the dehydration of methylthioribulose-1-phosphate (MTRu-1-P) into 2,3-diketo-5-methylthiopentyl-1-phosphate (DK-MTP-1-P). This Penicillium rubens (strain ATCC 28089 / DSM 1075 / NRRL 1951 / Wisconsin 54-1255) (Penicillium chrysogenum) protein is Methylthioribulose-1-phosphate dehydratase.